A 216-amino-acid polypeptide reads, in one-letter code: Peptide methionine sulfoxide reductase MsrA (216 aa).

C54 is a catalytic residue.

Belongs to the MsrA Met sulfoxide reductase family.

It catalyses the reaction L-methionyl-[protein] + [thioredoxin]-disulfide + H2O = L-methionyl-(S)-S-oxide-[protein] + [thioredoxin]-dithiol. The enzyme catalyses [thioredoxin]-disulfide + L-methionine + H2O = L-methionine (S)-S-oxide + [thioredoxin]-dithiol. Functionally, has an important function as a repair enzyme for proteins that have been inactivated by oxidation. Catalyzes the reversible oxidation-reduction of methionine sulfoxide in proteins to methionine. In Xylella fastidiosa (strain Temecula1 / ATCC 700964), this protein is Peptide methionine sulfoxide reductase MsrA.